The chain runs to 794 residues: MMQTKVQNKKRQVAFFILLMLWGEVGSESIQYSVLEETESGTFVANLTKDLGLRVGELASRGARVVFKGNRQHLQFDPQTHDLLLNEKLDREELCGSTELCVLPFQVLLENPLQFFQASLRVRDINDHAPEFPAREMLLKISEITMPGKIFPLKMAHDLDTGSNGLQRYTISSNPHFHVLTRNRSEGRKFPELVLDKPLDREEQPQLRLTLIALDGGSPPRSGTSEIQIQVLDINDNVPEFAEELYEAQVPENNPLGSLVITVSARDLDAGSFGKVSYALFQVDDVNQPFEINAITGEIRLRKALDFEEIQSYDLDVEATDGGGLSGKCSLLVRVLDVNDNAPELTMSFFISPIPENLPEIIVAVFSVSDADSGHNQQVICSIENNLPFLLRPTVENFYTLVTEGALDRESRAEYNITITVTDLGTPRLKTQQSITVQVSDVNDNAPAFTQTSYTLFVRENNSPALHIGSVSATDRDSGINAQVTYSLLPPQDPHLPLASLVSINADNGHLFALRSLDYEALQAFEFRVGATDRGSPALSSEALVRVLVLDANDNSPFVLYPLQNGSAPCTELVPRAAEPGYLVTKVVAVDGDSGQNAWLSYQLLKATELGLFGVWAHNGEVRTARLLSERDAAKHRLVVLVKDNGEPPRSATATLHVLLVDGFSQPYLPLPEAAPAPAQADLLTVYLVVALASVSSLFLFSVLLFVAVRLCRRSRAASVGRCSVPEGPFPEHLVDVNGTGTLSQSYQYKVCLTGGSETNEFKFLKPIMPNFPPQGTEREMEETPTSRNSFPFS.

Residues 1–27 (MMQTKVQNKKRQVAFFILLMLWGEVGS) form the signal peptide. At 28–688 (ESIQYSVLEE…AQADLLTVYL (661 aa)) the chain is on the extracellular side. Cadherin domains are found at residues 34 to 132 (VLEE…APEF), 137 to 241 (MLLK…VPEF), 246 to 345 (YEAQ…APEL), 350 to 449 (FISP…APAF), and 454 to 559 (YTLF…SPFV). N46 carries an N-linked (GlcNAc...) asparagine glycan. A disulfide bridge links C95 with C101. N183 carries an N-linked (GlcNAc...) asparagine glycan. N416 carries an N-linked (GlcNAc...) asparagine glycan. N-linked (GlcNAc...) asparagine glycosylation is present at N565. A Cadherin 6 domain is found at 566 to 669 (GSAPCTELVP…LVDGFSQPYL (104 aa)). A helical membrane pass occupies residues 689–709 (VVALASVSSLFLFSVLLFVAV). Over 710-794 (RLCRRSRAAS…PTSRNSFPFS (85 aa)) the chain is Cytoplasmic. The segment at 773–794 (PPQGTEREMEETPTSRNSFPFS) is disordered. Polar residues predominate over residues 784–794 (TPTSRNSFPFS).

Forms homodimers in trans (molecules expressed by two different cells). Forms promiscuous heterodimers in cis (at the plasma membrane of the same cell) with other protocadherins.

The protein localises to the cell membrane. Its function is as follows. Calcium-dependent cell-adhesion protein involved in cells self-recognition and non-self discrimination. Thereby, it is involved in the establishment and maintenance of specific neuronal connections in the brain. In Pan troglodytes (Chimpanzee), this protein is Protocadherin beta-6.